The chain runs to 227 residues: 2,3-bisphosphoglycerate-dependent phosphoglycerate mutase (227 aa).

Substrate contacts are provided by residues 7–14, 20–21, R59, 86–89, K97, 113–114, and 182–183; these read RHGQSEWN, TG, ERHY, RR, and GN. The active-site Tele-phosphohistidine intermediate is H8. The Proton donor/acceptor role is filled by E86.

The protein belongs to the phosphoglycerate mutase family. BPG-dependent PGAM subfamily. As to quaternary structure, homodimer.

The enzyme catalyses (2R)-2-phosphoglycerate = (2R)-3-phosphoglycerate. The protein operates within carbohydrate degradation; glycolysis; pyruvate from D-glyceraldehyde 3-phosphate: step 3/5. In terms of biological role, catalyzes the interconversion of 2-phosphoglycerate and 3-phosphoglycerate. In Neisseria meningitidis serogroup B (strain ATCC BAA-335 / MC58), this protein is 2,3-bisphosphoglycerate-dependent phosphoglycerate mutase.